A 603-amino-acid polypeptide reads, in one-letter code: Prosaposin receptor GPR37 (603 aa).

The signal sequence occupies residues Met1–Ala26. Residues Ala27–Met255 are Extracellular-facing. The N-linked (GlcNAc...) asparagine glycan is linked to Asn36. The tract at residues Cys39–Asn232 is disordered. Composition is skewed to basic and acidic residues over residues Arg51–Val79, Thr145–Ile158, and His165–Asp175. 2 N-linked (GlcNAc...) asparagine glycosylation sites follow: Asn212 and Asn229. Residues Cys256–Val276 form a helical membrane-spanning segment. Residues Cys277–Leu289 lie on the Cytoplasmic side of the membrane. Residues Leu290 to Phe310 traverse the membrane as a helical segment. Residues His311–Lys325 are Extracellular-facing. Cys324 and Cys409 are joined by a disulfide. A helical membrane pass occupies residues Ile326–Cys346. The Cytoplasmic segment spans residues Ile347–Thr369. The helical transmembrane segment at Thr370–Leu390 threads the bilayer. Over Arg391–Leu433 the chain is Extracellular. The chain crosses the membrane as a helical span at residues Trp434–Val454. The Cytoplasmic portion of the chain corresponds to Thr455–Thr483. The chain crosses the membrane as a helical span at residues Val484–Val504. At Thr505–Asn521 the chain is on the extracellular side. A helical membrane pass occupies residues Ile522 to Leu542. Over Cys543–Cys603 the chain is Cytoplasmic.

It belongs to the G-protein coupled receptor 1 family. Forms a complex with PRKN, STUB1 and HSP70. The amount of STUB1 in the complex increases during ER stress. STUB1 promotes the dissociation of HSP70 from PRKN, thus facilitating PRKN-mediated GPR37 ubiquitination. Interacts with PACRG. Post-translationally, the N-terminus is cleaved by ADAM10 metalloproteinase; mediating limited proteolysis leading to the release of receptor ectodomain by shedding. In addition, cleaved by FURIN between Arg-53 and Asp-54. In terms of processing, ubiquitinated by PRKN in the presence of UBE2E1 and UBE2L3 in the endoplasmic reticulum. The unfolded form is specifically ubiquitinated by SYVN1, which promotes its proteasomal degradation and prevents neuronal cell death. In terms of tissue distribution, highly expressed in the brain. High levels of expression were seen in fiber tracts such as the corpus callosum, anterior commissure, fornix, internal capsule, cerebral peduncles, and stria terminalis. Additionally, moderate levels of expression were seen in the pyramidal tracts and cerebellar peduncles, as well as in the spinal tract of the trigeminal nerve and the spinal fasciculi.

It is found in the cell projection. The protein resides in the dendrite. Its subcellular location is the synapse. It localises to the cell membrane. The protein localises to the endoplasmic reticulum membrane. Its function is as follows. G-protein-coupled receptor that plays a role in several physiological pathways such as resolution of inflammatory pain and oligodendrocyte differentiation. Acts as a receptor for several ligands including prosaposin, osteocalcin or neuroprotectin D1. Ligand binding induces endocytosis, followed by an ERK phosphorylation cascade. Acts as a receptor for osteocalcin (OCN) to regulate oligodendrocyte differentiation and central nervous system myelination. Mechanistically, plays a negative role in oligodendrocyte differentiation and myelination during development via activation of the ERK1/2 signaling pathway. Therefore, regulates the stability of myelin or resistance of myelin itself to demyelination. Upon activation by neuroprotectin D1 (NPD1), promotes the activation of phagocytosis in macrophages as well as the shift in cytokine release toward an anti-inflammatory profile, and thus helps to reverse inflammatory pain. In addition, the increased macrophage phagocytosis mediates protection against sepsis upon pathogen infection. Additionally, extracellular vesicles derived from efferocyte express prosaposin, which binds to macrophage GPR37 to increase expression of the efferocytosis receptor TIM4 via an ERK-AP1-dependent signaling axis, leading to increased macrophage efferocytosis efficiency and accelerated resolution of inflammation. May also act as a maturation factor of LRP6, protecting LRP6 from the endoplasmic reticulum (ER)-associated protein degradation (ERAD) and thereby promoting the Wnt/beta-catenin signaling pathway. This Rattus norvegicus (Rat) protein is Prosaposin receptor GPR37 (Gpr37).